The sequence spans 1377 residues: MQYLLSKKRIRKNFGKINLVSSIPNLIEVQKNSYNKEFLQLGVPVDCRENKGLQGVLNSIFPIHDLDGSAILEFVRYDFDEPKYDVEECIQRGLSYTAALKITLSLIVLDDSDKSDPKEIKGIKEQAVYFGDIPLMTANGTFVINGTERVVVSQMHRSPGVFFDHDDGKTHSTGKLIYSARVIPYRGSWLDFEFDAKDLLYFRIDRKRKLYVTTLLMALGMSSHDILNFYYESATYKKYKKSENGWIVDFLPELVSTKHLAYDLIDAQTGKVLLNAGQKITFRIAKMLADKGVKQILVKNDSLVGKLLAEDLVNNQTGEVLLGVGEEITNDILTIVNDLQITTVKVLAVGGQCGPYVRNTLFLDKNKDQKSSLVEIFRVLKPGEMATTAASRGLLDSLLFDNNRYDLSEVGRIKINSRLNLDIDLKNTCITVEDIKKIIKLLVDIKDGKALVDDIDHLGNRRVRSVGELVENQFRTGLVRIAKFIVERIGSVEIDAVVPNDLVNAKLLTSVIKEFFGTSQLSQFMDQTNALSQITHIRRLSALGPGGLNRDRAALEVRDVHPTHYGRICPIETPEGQNIGLINSLAIFAKINRYGFIESPYRRVINRRVTDEVVYLSALEEGRYKIAQADTSLCTNDCLIDGLVSCRYDGNFVMVLAQEVDFIDLTPMQVVSVAASMIPFLENDDANRALMGANMQRQAVPLLKSQAPLVGTGIESVVAHDSGTVVAALHDGIVEQVDSTRIVVKTSVKKDAGAPGVDIYNLKKFQRSNYNTCINQKVLVNVGDIVKKGDVIADGVATNKGEIALGRNVLVAFIAWNGYTFEDSILVSERIVKEDIYTSIHIEELELVARDTRLGPEEITRDIPNVNDESLRHLDEVGIVNIGAKVRTGDILVGKVTPKSESPVTPEEKLLRAIFGEKASEVKDSSLYVPPGITGTVIDVRVFSRRGIDKDERTLAIEKQKIRKLVKDYEDELAVIQHFTIVRVKELLVGQVAACSLDSIIIGDKLDEAMLNKLTNEQLLKLKADNSSIMDEISEIKCHYETTRAQLTSQLNSKIEKIQCGDDLPQGALRVVKVFIAIKHRLQPGDKMAGRHGNKGVVSKVVPEEDMPFLEDGTVVDIVLNPLGLPARMNVGQILETHLGWAGVNLGRKIGKMVDDYYSGNNQCTDEIRKFVKKIYANNSIADTIDQVNDQQLIEICQELRQGIYFSTPVFDGAKIADIKQMLELADVDKSGQVRLIDGRTGEYFDRRCTVGYQYLLKLHHLVDEKIHARSIGPYSLVTQQPLGGKSHFGGQRFGEMECWALEAYGAAYTLQELLTTKSDSVEGRIKMYQAIIRGNNNFVSGVPESLNVMIKELRSLCLNIQLEENDEEDENEDENY.

This sequence belongs to the RNA polymerase beta chain family. As to quaternary structure, the RNAP catalytic core consists of 2 alpha, 1 beta, 1 beta' and 1 omega subunit. When a sigma factor is associated with the core the holoenzyme is formed, which can initiate transcription.

The enzyme catalyses RNA(n) + a ribonucleoside 5'-triphosphate = RNA(n+1) + diphosphate. Its function is as follows. DNA-dependent RNA polymerase catalyzes the transcription of DNA into RNA using the four ribonucleoside triphosphates as substrates. This chain is DNA-directed RNA polymerase subunit beta, found in Orientia tsutsugamushi (strain Boryong) (Rickettsia tsutsugamushi).